Here is a 464-residue protein sequence, read N- to C-terminus: Kynureninase 2 (464 aa).

Residues L135, T136, F163–D166, D248, H251, and Y273 contribute to the pyridoxal 5'-phosphate site. At K274 the chain carries N6-(pyridoxal phosphate)lysine. The pyridoxal 5'-phosphate site is built by W313 and N341.

The protein belongs to the kynureninase family. In terms of assembly, homodimer. The cofactor is pyridoxal 5'-phosphate.

It is found in the cytoplasm. It catalyses the reaction L-kynurenine + H2O = anthranilate + L-alanine + H(+). The catalysed reaction is 3-hydroxy-L-kynurenine + H2O = 3-hydroxyanthranilate + L-alanine + H(+). It functions in the pathway amino-acid degradation; L-kynurenine degradation; L-alanine and anthranilate from L-kynurenine: step 1/1. The protein operates within cofactor biosynthesis; NAD(+) biosynthesis; quinolinate from L-kynurenine: step 2/3. In terms of biological role, catalyzes the cleavage of L-kynurenine (L-Kyn) and L-3-hydroxykynurenine (L-3OHKyn) into anthranilic acid (AA) and 3-hydroxyanthranilic acid (3-OHAA), respectively. In Aspergillus fumigatus (strain CBS 144.89 / FGSC A1163 / CEA10) (Neosartorya fumigata), this protein is Kynureninase 2 (bna5-2).